The primary structure comprises 555 residues: CTP synthase (555 aa).

Positions 1–267 are amidoligase domain; sequence MTKFVFVTGG…AQQVLKFMHL (267 aa). Ser-13 is a binding site for CTP. Ser-13 contributes to the UTP binding site. Residues 14–19 and Asp-71 contribute to the ATP site; that span reads SIGKGI. Residues Asp-71 and Glu-141 each contribute to the Mg(2+) site. Residues 148–150, 188–193, and Lys-224 contribute to the CTP site; these read DIE and KTKPTQ. UTP is bound by residues 188-193 and Lys-224; that span reads KTKPTQ. Ala-242 serves as a coordination point for ATP. A Glutamine amidotransferase type-1 domain is found at 299-535; sequence YVQLSDAYLS…VGACLADNGN (237 aa). Gly-354 is an L-glutamine binding site. Cys-381 serves as the catalytic Nucleophile; for glutamine hydrolysis. L-glutamine is bound by residues 382-385, Glu-405, and Arg-463; that span reads LGMQ. Catalysis depends on residues His-508 and Glu-510. The segment at 536–555 is disordered; that stretch reads NANHHDSTPAEPLVSEPLSS.

This sequence belongs to the CTP synthase family. As to quaternary structure, homotetramer.

It carries out the reaction UTP + L-glutamine + ATP + H2O = CTP + L-glutamate + ADP + phosphate + 2 H(+). It catalyses the reaction L-glutamine + H2O = L-glutamate + NH4(+). The enzyme catalyses UTP + NH4(+) + ATP = CTP + ADP + phosphate + 2 H(+). It participates in pyrimidine metabolism; CTP biosynthesis via de novo pathway; CTP from UDP: step 2/2. Allosterically activated by GTP, when glutamine is the substrate; GTP has no effect on the reaction when ammonia is the substrate. The allosteric effector GTP functions by stabilizing the protein conformation that binds the tetrahedral intermediate(s) formed during glutamine hydrolysis. Inhibited by the product CTP, via allosteric rather than competitive inhibition. Functionally, catalyzes the ATP-dependent amination of UTP to CTP with either L-glutamine or ammonia as the source of nitrogen. Regulates intracellular CTP levels through interactions with the four ribonucleotide triphosphates. This chain is CTP synthase, found in Acaryochloris marina (strain MBIC 11017).